The following is a 72-amino-acid chain: UPF0270 protein PM1156 (72 aa).

Belongs to the UPF0270 family.

This chain is UPF0270 protein PM1156, found in Pasteurella multocida (strain Pm70).